The primary structure comprises 812 residues: Probable beta-glucosidase D (812 aa).

Residues 1 to 18 (MRVPSLSVLSFLLGTALA) form the signal peptide. N-linked (GlcNAc...) asparagine glycosylation is found at N53 and N188. A disordered region spans residues 186-248 (ETNRTGGMGG…GMGGGMAGSS (63 aa)). Over residues 191–207 (GGMGGGGGAPGGGGMGR) the composition is skewed to gly residues. Residues 211-225 (FSSSVPGGMSPTSSA) are compositionally biased toward polar residues. Residues 236–245 (GGSGMGGGMA) are compositionally biased toward gly residues. An N-linked (GlcNAc...) asparagine glycan is attached at N296. D324 is an active-site residue. Residues N360, N384, N422, N501, N592, and N646 are each glycosylated (N-linked (GlcNAc...) asparagine).

Belongs to the glycosyl hydrolase 3 family.

It is found in the secreted. It catalyses the reaction Hydrolysis of terminal, non-reducing beta-D-glucosyl residues with release of beta-D-glucose.. The protein operates within glycan metabolism; cellulose degradation. Beta-glucosidases are one of a number of cellulolytic enzymes involved in the degradation of cellulosic biomass. Catalyzes the last step releasing glucose from the inhibitory cellobiose. This Emericella nidulans (strain FGSC A4 / ATCC 38163 / CBS 112.46 / NRRL 194 / M139) (Aspergillus nidulans) protein is Probable beta-glucosidase D (bglD).